The following is a 288-amino-acid chain: Ankyrin repeat and SOCS box protein 8 (288 aa).

Phosphoserine is present on Ser17. 4 ANK repeats span residues 52–81, 85–113, 117–146, and 150–179; these read GTLKPLHCACMVSDADCVELLLEKGAEVNA, YNRTVLHYAAEKDEACVEVLLEYGANPNA, NRDTPLHWAAFKNNAECVRALLESGASVNA, and NNDTPLSWAAMKGNLESVSILLDYGAEVRV. One can recognise an SOCS box domain in the interval 235–288; that stretch reads QLCEKLTVLCSAPGTLKTLARYAVRRSLGLQYLPDAVKGLPLPASLKEYLLLLE.

The protein belongs to the ankyrin SOCS box (ASB) family. In terms of assembly, interacts with TBK1; this interaction promotes TBK1 proteasomal degradation. Post-translationally, phosphorylated by TBK1.

It is found in the cytoplasm. Its pathway is protein modification; protein ubiquitination. Functionally, may be a substrate-recognition component of a SCF-like ECS (Elongin-Cullin-SOCS-box protein) E3 ubiquitin-protein ligase complex which mediates the ubiquitination and subsequent proteasomal degradation of target proteins. Inhibits IFN-beta production through the IRF3 signaling pathway by targeting TBK1 via 'Lys-48'-linked ubiquitination, leading to its proteasomal degradation. The protein is Ankyrin repeat and SOCS box protein 8 (ASB8) of Macaca fascicularis (Crab-eating macaque).